Reading from the N-terminus, the 312-residue chain is Bifunctional pinoresinol-lariciresinol reductase (312 aa).

Residues 10 to 16 (GGTGYIG), R35, and K44 contribute to the NADP(+) site. K136 acts as the Proton acceptor in catalysis. R140 lines the NADP(+) pocket. H268 is a binding site for substrate.

It belongs to the NmrA-type oxidoreductase family. Isoflavone reductase subfamily. Dimer. As to expression, expressed in seed coats, but not in embryos, leaves, stems and roots.

Reductase involved in lignan biosynthesis. Catalyzes the sequential conversion of pinoresinol into lariciresinol and of lariciresinol into secoisolariciresinol. Abstracts the 4R-hydride from the NADPH cofactor during catalysis. The protein is Bifunctional pinoresinol-lariciresinol reductase of Linum usitatissimum (Flax).